A 662-amino-acid chain; its full sequence is Transforming growth factor beta activator LRRC32 (662 aa).

The signal sequence occupies residues 1 to 17; the sequence is MRPQILLLLALLTLGLA. Over 18–625 the chain is Extracellular; the sequence is AQRQDKVPCK…EDCEKGGLKN (608 aa). Residues 21–48 form the LRRNT domain; sequence QDKVPCKMVDKKVSCQGLGLLQVPSVLP. LRR repeat units lie at residues 50 to 73, 74 to 95, 98 to 119, 125 to 145, 150 to 171, 174 to 195, 198 to 219, 220 to 240, 244 to 265, and 266 to 286; these read DTET…GFYT, ALRH…AFQA, HLEH…SAGG, RVTS…ERLL, SLHT…TFRD, VLEQ…AFEG, RLTH…SLQQ, LRVL…SQPQ, QLTW…AALP, and RLIY…PPQD. An N-linked (GlcNAc...) asparagine glycan is attached at asparagine 203. Residues asparagine 271 and asparagine 308 are each glycosylated (N-linked (GlcNAc...) asparagine). LRR repeat units follow at residues 316-339, 340-361, 364-385, 387-408, 411-432, 444-465, 467-488, 492-513, 515-536, and 537-558; these read QLLN…EHLT, SLCF…RSGS, CLML…ARAL, SLRT…TFAN, SLQR…DEPG, SLHS…AFLH, PLTE…ALGG, SLEV…LPCF, CLKR…TQAV, and SLEV…AMGG. An N-linked (GlcNAc...) asparagine glycan is attached at asparagine 345. Asparagine 545 carries an N-linked (GlcNAc...) asparagine glycan. The LRRCT domain maps to 571–620; it reads NPLSCCGNGWLAAQLHQGRVDVDATQDLICRFSSQEEVSLSHVRPEDCEK. Residues 626 to 646 form a helical membrane-spanning segment; sequence INLIIILTFILVSAILLTTLA. The Cytoplasmic segment spans residues 647-662; it reads TCCCVRRQKFNQQYKA.

Belongs to the LRRC32/LRRC33 family. In terms of assembly, interacts with TGFB1; associates via disulfide bonds with the Latency-associated peptide chain (LAP) regulatory chain of TGFB1, leading to regulate activation of TGF-beta-1. Interacts with TGFB2. Interacts with TGFB3; associates via disulfide bonds with the Latency-associated peptide chain (LAP) regulatory chain of TGFB3, leading to regulate activation of TGF-beta-3. Interacts with LAPTM4B; decreases TGFB1 production in regulatory T-cells.

It is found in the cell membrane. Its subcellular location is the cell surface. In terms of biological role, key regulator of transforming growth factor beta (TGFB1, TGFB2 and TGFB3) that controls TGF-beta activation by maintaining it in a latent state during storage in extracellular space. Associates specifically via disulfide bonds with the Latency-associated peptide (LAP), which is the regulatory chain of TGF-beta, and regulates integrin-dependent activation of TGF-beta. Able to outcompete LTBP1 for binding to LAP regulatory chain of TGF-beta. Controls activation of TGF-beta-1 (TGFB1) on the surface of activated regulatory T-cells (Tregs). Required for epithelial fusion during palate development by regulating activation of TGF-beta-3 (TGFB3). This Pongo abelii (Sumatran orangutan) protein is Transforming growth factor beta activator LRRC32.